The primary structure comprises 142 residues: Peptide methionine sulfoxide reductase MsrB (142 aa).

The region spanning 2 to 125 (LKKDKSELTD…NSAAIQFIPY (124 aa)) is the MsrB domain. The active-site Nucleophile is the C114.

This sequence belongs to the MsrB Met sulfoxide reductase family.

It carries out the reaction L-methionyl-[protein] + [thioredoxin]-disulfide + H2O = L-methionyl-(R)-S-oxide-[protein] + [thioredoxin]-dithiol. This Staphylococcus aureus (strain Mu3 / ATCC 700698) protein is Peptide methionine sulfoxide reductase MsrB.